The following is a 69-amino-acid chain: Small ribosomal subunit protein uS7 (69 aa).

This sequence belongs to the universal ribosomal protein uS7 family. As to quaternary structure, part of the 30S ribosomal subunit.

In terms of biological role, one of the primary rRNA binding proteins, it binds directly to 16S rRNA where it nucleates assembly of the head domain of the 30S subunit. Is located at the subunit interface close to the decoding center. This chain is Small ribosomal subunit protein uS7 (rps7), found in Methanococcoides methylutens.